We begin with the raw amino-acid sequence, 89 residues long: Small ribosomal subunit protein uS15 (89 aa).

This sequence belongs to the universal ribosomal protein uS15 family. In terms of assembly, part of the 30S ribosomal subunit. Forms a bridge to the 50S subunit in the 70S ribosome, contacting the 23S rRNA.

One of the primary rRNA binding proteins, it binds directly to 16S rRNA where it helps nucleate assembly of the platform of the 30S subunit by binding and bridging several RNA helices of the 16S rRNA. Functionally, forms an intersubunit bridge (bridge B4) with the 23S rRNA of the 50S subunit in the ribosome. This is Small ribosomal subunit protein uS15 from Escherichia coli O139:H28 (strain E24377A / ETEC).